The following is a 148-amino-acid chain: Male-specific protein scotti (148 aa).

Positions 56 to 78 (PQEPPLGVFPAQGGPNGPPRLRK) are disordered. Residue Asn129 is glycosylated (N-linked (GlcNAc...) asparagine).

The protein belongs to the male-specific scotti family.

Functionally, post-meiotically transcribed gene that has a role in late spermiogenesis; required for actin cone progression during spermatid individualization. The sequence is that of Male-specific protein scotti from Drosophila sechellia (Fruit fly).